Reading from the N-terminus, the 232-residue chain is Large ribosomal subunit protein uL1 (232 aa).

The protein belongs to the universal ribosomal protein uL1 family. As to quaternary structure, part of the 50S ribosomal subunit.

In terms of biological role, binds directly to 23S rRNA. The L1 stalk is quite mobile in the ribosome, and is involved in E site tRNA release. Protein L1 is also a translational repressor protein, it controls the translation of the L11 operon by binding to its mRNA. This is Large ribosomal subunit protein uL1 from Burkholderia cenocepacia (strain HI2424).